Here is a 126-residue protein sequence, read N- to C-terminus: Protein C10 (126 aa).

At Ala-2 the chain carries N-acetylalanine.

Belongs to the UPF0456 family. As to expression, ubiquitously expressed, with higher expression in lung and fetal brain.

It is found in the cytoplasm. In terms of biological role, in brain, may be required for corpus callosum development. The protein is Protein C10 (C12orf57) of Homo sapiens (Human).